The chain runs to 553 residues: Thioredoxin domain-containing protein 2 (553 aa).

2 disordered regions span residues 1–37 (MDVDKELGMESVKAGASGKPEMRLGTQEETSEGDANE) and 77–442 (TEES…EETM). The span at 99 to 143 (PKQDDSPKSSEETIQPKEGDIPKAPEETIQSKKEDLPKSSEKAIQ) shows a compositional bias: basic and acidic residues. Tandem repeats lie at residues 113 to 127 (QPKEGDIPKAPEETI), 128 to 142 (QSKKEDLPKSSEKAI), 143 to 157 (QPKESNIPKSSAKPI), 158 to 172 (QPKLGNIPKASVKPS), 173 to 187 (QPKEGDIPKAPEETI), 188 to 202 (QSKKEDLPKSSEEAI), 203 to 217 (QPKEGDIPKSSAKPI), 218 to 232 (QPKLGNIAKTSVKPS), 233 to 247 (QPKESDIPKSPEETI), 248 to 262 (QPKEGDIPKSSAKPI), 263 to 277 (QPKLGNIPKASVKPS), 278 to 292 (QPKEGDISKSPEEAI), 293 to 307 (QPKEGDLPKSLEEAI), 308 to 322 (QPKEGDIPKSPEEAI), 323 to 337 (QPKEGDIPKSLEEAI), 338 to 352 (QPKEGDIPKSPEETI), 353 to 367 (QPKKGDIPKSPEEAI), 368 to 382 (QPKEGDIPKSPKQAI), 383 to 397 (QPKEGDIPKSLEEAI), 398 to 412 (PPKEIDIPKSPEETI), 413 to 427 (QPKEDDSPKSLEEAT), and 428 to 442 (PSKEGDILKPEEETM). The tract at residues 113–442 (QPKEGDIPKA…DILKPEEETM (330 aa)) is 22 X 15 AA approximate tandem repeat of Q-P-K-X-G-D-I-P-K-S-[PS]-E-[KE]-X-I. Residues 173-209 (QPKEGDIPKAPEETIQSKKEDLPKSSEEAIQPKEGDI) are compositionally biased toward basic and acidic residues. A compositionally biased stretch (basic and acidic residues) spans 233–254 (QPKESDIPKSPEETIQPKEGDI). 2 stretches are compositionally biased toward basic and acidic residues: residues 278–376 (QPKE…DIPK) and 385–439 (KEGD…KPEE). Ser-362 bears the Phosphoserine mark. Phosphoserine is present on Ser-392. Positions 429 to 553 (SKEGDILKPE…KLEAVIAELK (125 aa)) constitute a Thioredoxin domain. A disulfide bond links Cys-480 and Cys-483.

In terms of tissue distribution, testis-specific. Only expressed during spermiogenesis, prominently in round and elongating spermatids.

It is found in the cytoplasm. Functionally, probably plays a regulatory role in sperm development. May participate in regulation of fibrous sheath (FS) assembly by supporting the formation of disulfide bonds during sperm tail morphogenesis. May also be required to rectify incorrect disulfide pairing and generate suitable pairs between the FS constituents. Can reduce disulfide bonds in vitro in the presence of NADP and thioredoxin reductase. This chain is Thioredoxin domain-containing protein 2 (TXNDC2), found in Homo sapiens (Human).